The primary structure comprises 610 residues: UvrABC system protein C (610 aa).

In terms of domain architecture, GIY-YIG spans 16 to 94 (SQPGVYRMYD…IKLYQPRYNV (79 aa)). The region spanning 204–239 (DQVLTQLISRMETASQNLEFEEAARIRDQIQAVRRV) is the UVR domain.

This sequence belongs to the UvrC family. In terms of assembly, interacts with UvrB in an incision complex.

The protein localises to the cytoplasm. Functionally, the UvrABC repair system catalyzes the recognition and processing of DNA lesions. UvrC both incises the 5' and 3' sides of the lesion. The N-terminal half is responsible for the 3' incision and the C-terminal half is responsible for the 5' incision. This is UvrABC system protein C from Escherichia coli (strain UTI89 / UPEC).